A 215-amino-acid polypeptide reads, in one-letter code: A-type ATP synthase subunit E (215 aa).

It belongs to the V-ATPase E subunit family. As to quaternary structure, has multiple subunits with at least A(3), B(3), C, D, E, F, H, I and proteolipid K(x).

The protein resides in the cell membrane. Its function is as follows. Component of the A-type ATP synthase that produces ATP from ADP in the presence of a proton gradient across the membrane. In Thermofilum pendens (strain DSM 2475 / Hrk 5), this protein is A-type ATP synthase subunit E.